The sequence spans 965 residues: Aminopeptidase N (965 aa).

Over 1-8 (MAKGFYIS) the chain is Cytoplasmic. A helical; Signal-anchor for type II membrane protein transmembrane segment spans residues 9–32 (KALGILAILLGVAAVATIIALSVV). Residues 33 to 65 (YAQEKNKNAERGTAAPTSPTGPTTTSATTLDQS) form a cytosolic Ser/Thr-rich junction region. Over 33–965 (YAQEKNKNAE…VVLNWFKDHS (933 aa)) the chain is Extracellular. The segment at 40 to 65 (NAERGTAAPTSPTGPTTTSATTLDQS) is disordered. Low complexity predominate over residues 44–61 (GTAAPTSPTGPTTTSATT). The segment at 66 to 965 (KPWNRYRLPT…VVLNWFKDHS (900 aa)) is metalloprotease. Residue N125 is glycosylated (N-linked (GlcNAc...) asparagine). Y173 is modified (sulfotyrosine). N231, N260, and N316 each carry an N-linked (GlcNAc...) asparagine glycan. Position 349 to 353 (349 to 353 (GAMEN)) interacts with substrate. Residue H385 participates in Zn(2+) binding. The active-site Proton acceptor is the E386. Zn(2+)-binding residues include H389 and E408. A Sulfotyrosine modification is found at Y416. 6 N-linked (GlcNAc...) asparagine glycosylation sites follow: N508, N569, N624, N680, N734, and N738. 2 disulfides stabilise this stretch: C760–C767 and C797–C833.

It belongs to the peptidase M1 family. In terms of assembly, homodimer. Interacts with SLC6A19. The cofactor is Zn(2+). Sulfated. In terms of processing, N- and O-glycosylated. Post-translationally, may undergo proteolysis and give rise to a soluble form.

Its subcellular location is the cell membrane. The enzyme catalyses Release of an N-terminal amino acid, Xaa-|-Yaa- from a peptide, amide or arylamide. Xaa is preferably Ala, but may be most amino acids including Pro (slow action). When a terminal hydrophobic residue is followed by a prolyl residue, the two may be released as an intact Xaa-Pro dipeptide.. Functionally, broad specificity aminopeptidase which plays a role in the final digestion of peptides generated from hydrolysis of proteins by gastric and pancreatic proteases. Also involved in the processing of various peptides including peptide hormones, such as angiotensin III and IV, neuropeptides, and chemokines. May also be involved the cleavage of peptides bound to major histocompatibility complex class II molecules of antigen presenting cells. May have a role in angiogenesis and promote cholesterol crystallization. May have a role in amino acid transport by acting as binding partner of amino acid transporter SLC6A19 and regulating its activity. The protein is Aminopeptidase N (ANPEP) of Bos taurus (Bovine).